A 306-amino-acid polypeptide reads, in one-letter code: Axin interactor, dorsalization-associated protein (306 aa).

Residues 27–62 (QLVEAIDEYQILARHLQKEAQAQHNNSEFTEEQKKT) adopt a coiled-coil conformation. A compositionally biased stretch (acidic residues) spans 128–138 (NLEFEEDEEEG). The disordered stretch occupies residues 128-153 (NLEFEEDEEEGGAGAGSPDSFPARVP). S144 carries the phosphoserine modification. The tract at residues 154 to 221 (GTLLPRLPSE…RKEDTYVHFN (68 aa)) is axin-binding. One can recognise a C2 Aida-type domain in the interval 157-304 (LPRLPSEPGM…LYLHLHQTLH (148 aa)).

It belongs to the AIDA family. In terms of assembly, interacts with AXIN1. As to expression, widely expressed in adult tissues, with highest expression in the heart and skeletal muscle.

Functionally, acts as a ventralizing factor during embryogenesis. Inhibits axin-mediated JNK activation by binding axin and disrupting axin homodimerization. This in turn antagonizes a Wnt/beta-catenin-independent dorsalization pathway activated by AXIN/JNK-signaling. The protein is Axin interactor, dorsalization-associated protein (AIDA) of Homo sapiens (Human).